Reading from the N-terminus, the 391-residue chain is S-adenosylmethionine synthase (391 aa).

His-16 contacts ATP. Asp-18 serves as a coordination point for Mg(2+). Glu-44 provides a ligand contact to K(+). 2 residues coordinate L-methionine: Glu-57 and Gln-101. A flexible loop region spans residues 101 to 111 (QSADIAQGVDA). Residues 166 to 168 (DAK), Asp-244, 250 to 251 (RK), Ala-267, and Lys-271 contribute to the ATP site. Residue Asp-244 coordinates L-methionine. Lys-275 is an L-methionine binding site.

The protein belongs to the AdoMet synthase family. Homotetramer; dimer of dimers. Requires Mg(2+) as cofactor. It depends on K(+) as a cofactor.

It is found in the cytoplasm. It catalyses the reaction L-methionine + ATP + H2O = S-adenosyl-L-methionine + phosphate + diphosphate. The protein operates within amino-acid biosynthesis; S-adenosyl-L-methionine biosynthesis; S-adenosyl-L-methionine from L-methionine: step 1/1. In terms of biological role, catalyzes the formation of S-adenosylmethionine (AdoMet) from methionine and ATP. The overall synthetic reaction is composed of two sequential steps, AdoMet formation and the subsequent tripolyphosphate hydrolysis which occurs prior to release of AdoMet from the enzyme. The protein is S-adenosylmethionine synthase of Zymomonas mobilis subsp. mobilis (strain ATCC 31821 / ZM4 / CP4).